Consider the following 473-residue polypeptide: Glutamate--tRNA ligase (473 aa).

The short motif at 11–21 is the 'HIGH' region element; the sequence is PSPTGFLHIGG. Positions 240 to 244 match the 'KMSKS' region motif; it reads KLSKR. An ATP-binding site is contributed by Lys-243.

The protein belongs to the class-I aminoacyl-tRNA synthetase family. Glutamate--tRNA ligase type 1 subfamily. Monomer.

The protein resides in the cytoplasm. The enzyme catalyses tRNA(Glu) + L-glutamate + ATP = L-glutamyl-tRNA(Glu) + AMP + diphosphate. In terms of biological role, catalyzes the attachment of glutamate to tRNA(Glu) in a two-step reaction: glutamate is first activated by ATP to form Glu-AMP and then transferred to the acceptor end of tRNA(Glu). The polypeptide is Glutamate--tRNA ligase (Afipia carboxidovorans (strain ATCC 49405 / DSM 1227 / KCTC 32145 / OM5) (Oligotropha carboxidovorans)).